Consider the following 126-residue polypeptide: Fatty acid-binding protein, liver (126 aa).

Residues 54 to 56, 99 to 101, and Arg-121 contribute to the cholate site; these read TPN and HEQ.

This sequence belongs to the calycin superfamily. Fatty-acid binding protein (FABP) family.

It is found in the cytoplasm. In terms of biological role, FABPs are thought to play a role in the intracellular transport of long-chain fatty acids and their acyl-CoA esters. In Anolis pulchellus (Common grass anole), this protein is Fatty acid-binding protein, liver.